The primary structure comprises 265 residues: NAD kinase 1 (265 aa).

Catalysis depends on Asp-45, which acts as the Proton acceptor. Residues 45–46, His-50, 122–123, Arg-148, Asp-150, and Ala-185 each bind NAD(+); these read DG and NE.

Belongs to the NAD kinase family. It depends on a divalent metal cation as a cofactor.

It localises to the cytoplasm. It carries out the reaction NAD(+) + ATP = ADP + NADP(+) + H(+). Functionally, involved in the regulation of the intracellular balance of NAD and NADP, and is a key enzyme in the biosynthesis of NADP. Catalyzes specifically the phosphorylation on 2'-hydroxyl of the adenosine moiety of NAD to yield NADP. This chain is NAD kinase 1, found in Halalkalibacterium halodurans (strain ATCC BAA-125 / DSM 18197 / FERM 7344 / JCM 9153 / C-125) (Bacillus halodurans).